Consider the following 214-residue polypeptide: Small ribosomal subunit protein eS6 (214 aa).

It belongs to the eukaryotic ribosomal protein eS6 family.

The chain is Small ribosomal subunit protein eS6 (rps6e) from Saccharolobus islandicus (strain Y.G.57.14 / Yellowstone #1) (Sulfolobus islandicus).